We begin with the raw amino-acid sequence, 96 residues long: MKYFNGLFSIFFFLLLTNYLNFNSRISNQLNQMLLDDGWIDKVKQLTREEMERSDSTNFVDILNKVEPQALNMVNDKTRTEILQTIKEFLNDIVEV.

The protein belongs to the ENY2 family. Component of the nuclear pore complex (NPC)-associated TREX-2 complex (transcription and export complex 2), composed of at least SUS1, SAC3, THP1, SEM1, and CDC31. TREX-2 contains 2 SUS1 chains. The TREX-2 complex interacts with the nucleoporin NUP1. Component of the 1.8 MDa SAGA transcription coactivator-HAT complex. SAGA is built of 5 distinct domains with specialized functions. Within the SAGA complex, SUS1, SGF11, SGF73 and UBP8 form an additional subcomplex of SAGA called the DUB module (deubiquitination module). Interacts directly with THP1, SAC3, SGF11, and with the RNA polymerase II.

Its subcellular location is the nucleus. The protein resides in the nucleoplasm. It is found in the cytoplasm. It localises to the P-body. Its function is as follows. Involved in mRNA export coupled transcription activation by association with both the TREX-2 and the SAGA complexes. At the promoters, SAGA is required for recruitment of the basal transcription machinery. It influences RNA polymerase II transcriptional activity through different activities such as TBP interaction and promoter selectivity, interaction with transcription activators, and chromatin modification through histone acetylation and deubiquitination. Within the SAGA complex, participates in a subcomplex required for deubiquitination of H2B and for the maintenance of steady-state H3 methylation levels. The TREX-2 complex functions in docking export-competent ribonucleoprotein particles (mRNPs) to the nuclear entrance of the nuclear pore complex (nuclear basket). TREX-2 participates in mRNA export and accurate chromatin positioning in the nucleus by tethering genes to the nuclear periphery. May also be involved in cytoplasmic mRNA decay by interaction with components of P-bodies. This chain is Transcription and mRNA export factor SUS1, found in Kluyveromyces lactis (strain ATCC 8585 / CBS 2359 / DSM 70799 / NBRC 1267 / NRRL Y-1140 / WM37) (Yeast).